Consider the following 353-residue polypeptide: Polyprenal reductase 2 (353 aa).

6 consecutive transmembrane segments (helical) span residues 11 to 31, 78 to 98, 175 to 195, 234 to 254, 291 to 308, and 313 to 335; these read PLLCFAWIAATLPIIAAALPI, FMHFYVVGVLATTILLLAIWF, MHIVGYLTGLFYYVAAPLSLA, PLLKLGWTQWIGAVIFIWGSL, YLAELVIYFGMLVASGAE, and WFLFIFVITNLSFAAVETYNWYL.

It belongs to the steroid 5-alpha reductase family. Polyprenal reductase subfamily.

The protein resides in the cell membrane. The catalysed reaction is a di-trans,poly-cis-dolichal + NADP(+) = a di-trans,poly-cis-polyprenal + NADPH + H(+). It participates in protein modification; protein glycosylation. Its function is as follows. Plays a key role in early steps of protein N-linked glycosylation by being involved in the conversion of polyprenol into dolichol. Acts as a polyprenal reductase that mediates the reduction of polyprenal into dolichal in a NADP-dependent mechanism. Dolichols are required for the synthesis of dolichol-linked monosaccharides and the oligosaccharide precursor used for N-glycosylation. The chain is Polyprenal reductase 2 from Oryza sativa subsp. japonica (Rice).